The sequence spans 359 residues: ELAV-like protein 2 (359 aa).

The tract at residues 1–33 (METQLSNGPTCNNTANGPTTINNNCSSPVDSGN) is disordered. RRM domains are found at residues 39 to 117 (TNLI…YARP) and 125 to 205 (ANLY…FANN). Ser-221 carries the post-translational modification Phosphoserine. One can recognise an RRM 3 domain in the interval 276–354 (WCIFVYNLAP…RVLQVSFKTN (79 aa)).

Belongs to the RRM elav family. In terms of assembly, interacts with IGF2BP1. Interacts with MAP1B light chain LC1.

Functionally, RNA-binding protein that binds to the 3' untranslated region (3'UTR) of target mRNAs. Seems to recognize a GAAA motif. Can bind to its own 3'UTR, the FOS 3'UTR and the ID 3'UTR. This is ELAV-like protein 2 (ELAVL2) from Pongo abelii (Sumatran orangutan).